Consider the following 31-residue polypeptide: MFTLTSYFGFLLAALTITFVLFIGLNKIRLI.

A helical membrane pass occupies residues 4-24 (LTSYFGFLLAALTITFVLFIG).

It belongs to the PetL family. In terms of assembly, the 4 large subunits of the cytochrome b6-f complex are cytochrome b6, subunit IV (17 kDa polypeptide, PetD), cytochrome f and the Rieske protein, while the 4 small subunits are PetG, PetL, PetM and PetN. The complex functions as a dimer.

The protein resides in the plastid. It localises to the chloroplast thylakoid membrane. Component of the cytochrome b6-f complex, which mediates electron transfer between photosystem II (PSII) and photosystem I (PSI), cyclic electron flow around PSI, and state transitions. PetL is important for photoautotrophic growth as well as for electron transfer efficiency and stability of the cytochrome b6-f complex. This chain is Cytochrome b6-f complex subunit 6, found in Oxybasis rubra (Red goosefoot).